Here is a 492-residue protein sequence, read N- to C-terminus: MRDMGRSDIVISAVDALDIHIAMTSNACDKYPAKQHARRVAVKLGVSTGLVYLAGQPTVNWGDSDQPRPFRQRRYFYYLSGVDEADCYVTYDIRNDLLTLYVPDFDLHRAVWMGPTLTVEEARERYDVDQVRYYASLQGDVQRWVDKYNQSSPLYILHDTQRPRVSSNEVRFDDESLLPAMDATRGVKDEHEIRMIREANRISGLAHRRVLENIHRMSNEAEIEGLFLNTCISHRAKNQAYELIAGSGENAAVLHYVKNNEPLRGRQLVCLDAGAEWNCYASDVTRTFPLGTDWPSAEARHIYQLVEEMQEECIKRIQKGVRFIDLQVLAHVIAIEGLMRLGILRGGSVEEIRESGASTVFFPHGLGHHVGLEVHDVSAKDLRASDADRDYYNSVLTPSTSHGPCTLSAPALEEGMVVTVEPGIYFSRLALANARKLPYAKYIDFNEAEKYIPIGGVRIEDDILVTSSGYENLTTAPKGEAMLEIIRRGIDN.

Residues D272, D283, E421, and E460 each contribute to the Mn(2+) site.

It belongs to the peptidase M24B family. Mn(2+) is required as a cofactor.

The catalysed reaction is Release of any N-terminal amino acid, including proline, that is linked to proline, even from a dipeptide or tripeptide.. Catalyzes the removal of a penultimate prolyl residue from the N-termini of peptides. This Aspergillus clavatus (strain ATCC 1007 / CBS 513.65 / DSM 816 / NCTC 3887 / NRRL 1 / QM 1276 / 107) protein is Probable Xaa-Pro aminopeptidase ACLA_020440.